A 165-amino-acid chain; its full sequence is 3-isopropylmalate dehydratase small subunit (165 aa).

The protein belongs to the LeuD family. LeuD type 2 subfamily. In terms of assembly, heterodimer of LeuC and LeuD.

It catalyses the reaction (2R,3S)-3-isopropylmalate = (2S)-2-isopropylmalate. It participates in amino-acid biosynthesis; L-leucine biosynthesis; L-leucine from 3-methyl-2-oxobutanoate: step 2/4. Its function is as follows. Catalyzes the isomerization between 2-isopropylmalate and 3-isopropylmalate, via the formation of 2-isopropylmaleate. The protein is 3-isopropylmalate dehydratase small subunit of Saccharolobus islandicus (strain M.14.25 / Kamchatka #1) (Sulfolobus islandicus).